Consider the following 697-residue polypeptide: SPX domain-containing membrane protein At1g63010 (697 aa).

The region spanning 2–145 (VAFGKYLQRK…GYRFADYYVK (144 aa)) is the SPX domain. The next 6 helical transmembrane spans lie at 247-267 (FNSLLLNLGNTFLYMVNTYII), 278-298 (LGAAATVCGVVIGSMAVAQVF), 315-335 (LVFSSIALFIGNLMYALAYDA), 337-356 (SIALLLLGRVCCGLGSARAV), 375-395 (AGFVSASALGMACGPALAGLL), and 411-431 (LPGWVMAVAWLFYLVWLCISF). Residues 439–459 (EDGEKNNRNETTSDRVESSRV) form a disordered region. Transmembrane regions (helical) follow at residues 513 to 533 (LLIYFMLKYSMEILLSESSVI), 544 to 564 (SVAIFLACLGLTVLPINILVG), 576 to 596 (ILLTSEIIVFLGILFSFNLFV), 604 to 624 (VISGLIMFVAAEVLEGVNLSL), and 670 to 690 (LLNATLLPSLVICIGSIVATC).

The protein belongs to the major facilitator superfamily.

Its subcellular location is the membrane. In Arabidopsis thaliana (Mouse-ear cress), this protein is SPX domain-containing membrane protein At1g63010.